Here is a 131-residue protein sequence, read N- to C-terminus: D-ribose pyranase (131 aa).

His20 (proton donor) is an active-site residue. Substrate is bound by residues Asp28, His98, and 120–122 (YSN).

This sequence belongs to the RbsD / FucU family. RbsD subfamily. As to quaternary structure, homodecamer.

The protein localises to the cytoplasm. It carries out the reaction beta-D-ribopyranose = beta-D-ribofuranose. It functions in the pathway carbohydrate metabolism; D-ribose degradation; D-ribose 5-phosphate from beta-D-ribopyranose: step 1/2. Catalyzes the interconversion of beta-pyran and beta-furan forms of D-ribose. This Limosilactobacillus fermentum (strain NBRC 3956 / LMG 18251) (Lactobacillus fermentum) protein is D-ribose pyranase.